The sequence spans 467 residues: Dimethylamine methyltransferase MtbB2 (467 aa).

Position 356 (pyrrolysine 356) is a non-standard amino acid, pyrrolysine.

It belongs to the dimethylamine methyltransferase family.

It catalyses the reaction Co(I)-[dimethylamine-specific corrinoid protein] + dimethylamine + H(+) = methyl-Co(III)-[dimethylamine-specific corrinoid protein] + methylamine. The protein operates within one-carbon metabolism; methanogenesis from dimethylamine. Its function is as follows. Catalyzes the transfer of a methyl group from dimethylamine to the corrinoid cofactor of MtbC. The protein is Dimethylamine methyltransferase MtbB2 (mtbB2) of Methanosarcina barkeri (strain Fusaro / DSM 804).